Reading from the N-terminus, the 130-residue chain is Iron-sulfur cluster insertion protein ErpA (130 aa).

Iron-sulfur cluster-binding residues include Cys58, Cys122, and Cys124.

Belongs to the HesB/IscA family. As to quaternary structure, homodimer. Iron-sulfur cluster is required as a cofactor.

In terms of biological role, required for insertion of 4Fe-4S clusters for at least IspG. The polypeptide is Iron-sulfur cluster insertion protein ErpA (Stenotrophomonas maltophilia (strain R551-3)).